Consider the following 197-residue polypeptide: Penicillin-binding protein activator LpoB (197 aa).

The first 17 residues, 1 to 17 (MIKRMSGIALAALLLSG), serve as a signal peptide directing secretion. The N-palmitoyl cysteine moiety is linked to residue Cys-18. Cys-18 carries the S-diacylglycerol cysteine lipid modification. The interval 23–57 (PRGETPSQPPAPTTPAKPSVVPTPTPPVVTPVPQP) is disordered. The segment covering 29–57 (SQPPAPTTPAKPSVVPTPTPPVVTPVPQP) has biased composition (pro residues).

This sequence belongs to the LpoB family. In terms of assembly, interacts with PBP1b.

It is found in the cell outer membrane. In terms of biological role, regulator of peptidoglycan synthesis that is essential for the function of penicillin-binding protein 1B (PBP1b). The polypeptide is Penicillin-binding protein activator LpoB (Edwardsiella piscicida).